A 213-amino-acid polypeptide reads, in one-letter code: Ras-related protein RabK1 (213 aa).

Position 14-21 (14-21 (GDRMVGKL)) interacts with GTP. An Effector region motif is present at residues 36 to 43 (GNSIPFDF). Residues 61 to 65 (NTHGS) and 119 to 122 (TKSD) each bind GTP.

It belongs to the small GTPase superfamily. Rab family.

This Dictyostelium discoideum (Social amoeba) protein is Ras-related protein RabK1 (rabK1).